Reading from the N-terminus, the 247-residue chain is tRNA1(Val) (adenine(37)-N6)-methyltransferase (247 aa).

It belongs to the methyltransferase superfamily. tRNA (adenine-N(6)-)-methyltransferase family.

Its subcellular location is the cytoplasm. The enzyme catalyses adenosine(37) in tRNA1(Val) + S-adenosyl-L-methionine = N(6)-methyladenosine(37) in tRNA1(Val) + S-adenosyl-L-homocysteine + H(+). In terms of biological role, specifically methylates the adenine in position 37 of tRNA(1)(Val) (anticodon cmo5UAC). The chain is tRNA1(Val) (adenine(37)-N6)-methyltransferase from Edwardsiella ictaluri (strain 93-146).